The following is a 428-amino-acid chain: Serine--tRNA ligase (428 aa).

231–233 (TAE) is a binding site for L-serine. 262–264 (RSE) lines the ATP pocket. Glu-285 serves as a coordination point for L-serine. 349-352 (EISS) contributes to the ATP binding site. Position 385 (Ser-385) interacts with L-serine.

Belongs to the class-II aminoacyl-tRNA synthetase family. Type-1 seryl-tRNA synthetase subfamily. As to quaternary structure, homodimer. The tRNA molecule binds across the dimer.

It localises to the cytoplasm. The catalysed reaction is tRNA(Ser) + L-serine + ATP = L-seryl-tRNA(Ser) + AMP + diphosphate + H(+). It carries out the reaction tRNA(Sec) + L-serine + ATP = L-seryl-tRNA(Sec) + AMP + diphosphate + H(+). Its pathway is aminoacyl-tRNA biosynthesis; selenocysteinyl-tRNA(Sec) biosynthesis; L-seryl-tRNA(Sec) from L-serine and tRNA(Sec): step 1/1. Its function is as follows. Catalyzes the attachment of serine to tRNA(Ser). Is also able to aminoacylate tRNA(Sec) with serine, to form the misacylated tRNA L-seryl-tRNA(Sec), which will be further converted into selenocysteinyl-tRNA(Sec). The chain is Serine--tRNA ligase from Staphylococcus aureus (strain MSSA476).